The primary structure comprises 310 residues: Ribosomal RNA small subunit methyltransferase H (310 aa).

S-adenosyl-L-methionine contacts are provided by residues 33 to 35, D53, F79, D100, and Q107; that span reads AGH.

The protein belongs to the methyltransferase superfamily. RsmH family.

It localises to the cytoplasm. The enzyme catalyses cytidine(1402) in 16S rRNA + S-adenosyl-L-methionine = N(4)-methylcytidine(1402) in 16S rRNA + S-adenosyl-L-homocysteine + H(+). Its function is as follows. Specifically methylates the N4 position of cytidine in position 1402 (C1402) of 16S rRNA. This is Ribosomal RNA small subunit methyltransferase H from Clostridium perfringens (strain 13 / Type A).